The primary structure comprises 646 residues: Threonine--tRNA ligase (646 aa).

Residues 1–61 enclose the TGS domain; the sequence is MIKITFPDGN…NEDSNFEIVT (61 aa). The catalytic stretch occupies residues 242–540; sequence DHRKLGRELD…LIEVYKGAFP (299 aa). 3 residues coordinate Zn(2+): Cys-336, His-387, and His-517.

The protein belongs to the class-II aminoacyl-tRNA synthetase family. Homodimer. Requires Zn(2+) as cofactor.

Its subcellular location is the cytoplasm. It catalyses the reaction tRNA(Thr) + L-threonine + ATP = L-threonyl-tRNA(Thr) + AMP + diphosphate + H(+). In terms of biological role, catalyzes the attachment of threonine to tRNA(Thr) in a two-step reaction: L-threonine is first activated by ATP to form Thr-AMP and then transferred to the acceptor end of tRNA(Thr). Also edits incorrectly charged L-seryl-tRNA(Thr). This chain is Threonine--tRNA ligase, found in Lactococcus lactis subsp. lactis (strain IL1403) (Streptococcus lactis).